Reading from the N-terminus, the 318-residue chain is MAAAAVSGALGRAGWRLLQLRCLPVARCRQALVPRAFHASAVGLRSSDEQKQQPPNSFSQQHSETQGAEKPDPESSHSPPRYTDQGGEEEEDYESEEQLQHRILTAALEFVPAHGWTAEAIAEGAQSLGLSSAAASMFGKDGSELILHFVTQCNTRLTRVLEEEQKLVQLGQAEKRKTDQFLRDAVETRLRMLIPYIEHWPRALSILMLPHNIPSSLSLLTSMVDDMWHYAGDQSTDFNWYTRRAMLAAIYNTTELVMMQDSSPDFEDTWRFLENRVNDAMNMGHTAKQVKSTGEALVQGLMGAAVTLKNLTGLNQRR.

The transit peptide at Met-1–Leu-44 directs the protein to the mitochondrion. Residues Arg-16 to Ala-31 carry the SIFI-degron motif. Residues Leu-44–Gln-98 are disordered. The segment covering Gln-52–Gln-66 has biased composition (polar residues). Acidic residues predominate over residues Gly-86–Glu-97. Lys-175 carries the N6-acetyllysine modification. An a 1,2-diacylglycero-3-phosphoethanolamine-binding site is contributed by Arg-244.

The protein belongs to the COQ9 family. In terms of assembly, homodimer. Heterodimer; two heterodimers of COQ7:COQ9 come together on the same side of the lipid pseudo-bilayer and form a curved tetramer with a hydrophobic surface suitable for membrane interaction. These two tetramers assemble into a soluble octamer with a pseudo-bilayer of lipids captured within. Interacts with COQ7; this interaction allows ubiquinone (CoQ) isoprene intermediates presentation to COQ7 and facilitates the COQ7-mediated hydroxylase step. Post-translationally, in response to mitochondrial stress, the precursor protein is ubiquitinated by the SIFI complex in the cytoplasm before mitochondrial import, leading to its degradation. Within the SIFI complex, UBR4 initiates ubiquitin chain that are further elongated or branched by KCMF1.

The protein resides in the mitochondrion. It participates in cofactor biosynthesis; ubiquinone biosynthesis. In terms of biological role, membrane-associated protein that warps the membrane surface to access and bind aromatic isoprenes with high specificity, including ubiquinone (CoQ) isoprene intermediates and presents them directly to COQ7, therefore facilitating the COQ7-mediated hydroxylase step. Participates in the biosynthesis of coenzyme Q, also named ubiquinone, an essential lipid-soluble electron transporter for aerobic cellular respiration. This is Ubiquinone biosynthesis protein COQ9, mitochondrial from Homo sapiens (Human).